The chain runs to 520 residues: Putative hydrolase Mb2247c (520 aa).

An N-terminal signal peptide occupies residues 1–34 (MAAMWRRRPLSSALLSFGLLLGGLPLAAPPLAGA). Residues 104–124 (FGALLVNPGGPGASAVDMVAA) form a helical membrane-spanning segment. In terms of domain architecture, AB hydrolase-1 spans 105–403 (GALLVNPGGP…APTPADPAAW (299 aa)). S232 serves as the catalytic Nucleophile. D461 is a catalytic residue. Catalysis depends on H488, which acts as the Proton donor.

Belongs to the peptidase S33 family.

It is found in the cell membrane. This is Putative hydrolase Mb2247c from Mycobacterium bovis (strain ATCC BAA-935 / AF2122/97).